A 282-amino-acid chain; its full sequence is Purine nucleoside phosphorylase (282 aa).

Residues Ser46, His78, and 103-105 (RTH) each bind phosphate. The active site involves Glu204. Residue Glu204 coordinates a purine D-ribonucleoside. Residue Ser223 participates in phosphate binding. Asn246 contacts a purine D-ribonucleoside.

It belongs to the PNP/MTAP phosphorylase family. As to quaternary structure, homotrimer.

The catalysed reaction is a purine 2'-deoxy-D-ribonucleoside + phosphate = a purine nucleobase + 2-deoxy-alpha-D-ribose 1-phosphate. It participates in purine metabolism; purine nucleoside salvage. Its function is as follows. The purine nucleoside phosphorylases catalyze the phosphorolytic breakdown of the N-glycosidic bond in the beta-(deoxy)ribonucleoside molecules, with the formation of the corresponding free purine bases and pentose-1-phosphate. Cleaves guanosine, inosine, 2'-deoxyguanosine and 2'-deoxyinosine. In Cellulomonas sp, this protein is Purine nucleoside phosphorylase (punA).